Consider the following 91-residue polypeptide: RNA-binding protein Hfq (91 aa).

Positions 9-68 (DPFLNALRRERVPVSIYLVNGIKLQGQVESFDQFVILLKNTVSQMVYKHAISTVVPSRPF) constitute a Sm domain. The disordered stretch occupies residues 66-91 (RPFNVGSHQGGSSNYNAQQDDSAGEQ). Polar residues predominate over residues 71-91 (GSHQGGSSNYNAQQDDSAGEQ).

Belongs to the Hfq family. In terms of assembly, homohexamer.

In terms of biological role, RNA chaperone that binds small regulatory RNA (sRNAs) and mRNAs to facilitate mRNA translational regulation in response to envelope stress, environmental stress and changes in metabolite concentrations. Also binds with high specificity to tRNAs. This Shewanella amazonensis (strain ATCC BAA-1098 / SB2B) protein is RNA-binding protein Hfq.